Consider the following 247-residue polypeptide: uncharacterized protein (247 aa).

Belongs to the AIM2 family.

Its subcellular location is the cytoplasm. It localises to the nucleus. This is an uncharacterized protein from Schizosaccharomyces pombe (strain 972 / ATCC 24843) (Fission yeast).